Consider the following 123-residue polypeptide: WAP four-disulfide core domain protein 2 (123 aa).

The first 28 residues, 1 to 28, serve as a signal peptide directing secretion; the sequence is MPASRLVPLGAVLLLGLLLLLELPPVTG. WAP domains are found at residues 30 to 71 and 74 to 122; these read GADK…SAIC and PNEK…VTPN. 8 disulfide bridges follow: C37–C63, C46–C67, C50–C62, C56–C71, C81–C109, C92–C113, C96–C108, and C102–C118. The N-linked (GlcNAc...) asparagine glycan is linked to N45.

In terms of assembly, homotrimer; disulfide-linked. In terms of tissue distribution, epididymis.

The protein localises to the secreted. Broad range protease inhibitor. The protein is WAP four-disulfide core domain protein 2 (WFDC2) of Oryctolagus cuniculus (Rabbit).